The primary structure comprises 571 residues: Proline--tRNA ligase (571 aa).

It belongs to the class-II aminoacyl-tRNA synthetase family. ProS type 1 subfamily. In terms of assembly, homodimer.

It is found in the cytoplasm. The enzyme catalyses tRNA(Pro) + L-proline + ATP = L-prolyl-tRNA(Pro) + AMP + diphosphate. In terms of biological role, catalyzes the attachment of proline to tRNA(Pro) in a two-step reaction: proline is first activated by ATP to form Pro-AMP and then transferred to the acceptor end of tRNA(Pro). As ProRS can inadvertently accommodate and process non-cognate amino acids such as alanine and cysteine, to avoid such errors it has two additional distinct editing activities against alanine. One activity is designated as 'pretransfer' editing and involves the tRNA(Pro)-independent hydrolysis of activated Ala-AMP. The other activity is designated 'posttransfer' editing and involves deacylation of mischarged Ala-tRNA(Pro). The misacylated Cys-tRNA(Pro) is not edited by ProRS. This is Proline--tRNA ligase from Pseudomonas syringae pv. tomato (strain ATCC BAA-871 / DC3000).